Here is a 359-residue protein sequence, read N- to C-terminus: MITVNVDLGDRAYPIHIGAGLIGRTELFAPHIKGSSVTIVTNTTVDPLYGDALRAALAPLGKRVSTVVLPDGEAYKNWETLNLIFDGLLTDHADRKTTLVALGGGVVGDMTGFAAACYMRGVPFIQVPTTLLSQVDSSVGGKTGINHPLGKNMIGAFYQPQAVIADIGALTTLPDRELAAGVAEVIKTGAIADAGFFDWIEANVEALNRREPAALAHAVKRSCEIKASVVAADEREGGLRAILNFGHTFGHAIEAGLGYGEWLHGEAVGCGMVMAGDLSVRLGLLDEASRQRLDAVIAAAHLPTRGPALGDARYMDLMRVDKKAEAGAIKFILLKRFGDTLITQAPDEAVFATLAQTTR.

NAD(+)-binding positions include 71-76, 105-109, 129-130, Lys142, and Lys151; these read DGEAYK, GVVGD, and TT. The Zn(2+) site is built by Glu184, His247, and His264.

It belongs to the sugar phosphate cyclases superfamily. Dehydroquinate synthase family. It depends on Co(2+) as a cofactor. Zn(2+) serves as cofactor. Requires NAD(+) as cofactor.

It localises to the cytoplasm. It carries out the reaction 7-phospho-2-dehydro-3-deoxy-D-arabino-heptonate = 3-dehydroquinate + phosphate. The protein operates within metabolic intermediate biosynthesis; chorismate biosynthesis; chorismate from D-erythrose 4-phosphate and phosphoenolpyruvate: step 2/7. Catalyzes the conversion of 3-deoxy-D-arabino-heptulosonate 7-phosphate (DAHP) to dehydroquinate (DHQ). The polypeptide is 3-dehydroquinate synthase (Burkholderia cenocepacia (strain HI2424)).